A 371-amino-acid chain; its full sequence is Leu/Ile/Val-binding protein homolog 2 (371 aa).

The first 23 residues, 1–23 (MKKSLFCGVCLCALVAMGGTSFA), serve as a signal peptide directing secretion.

The protein belongs to the leucine-binding protein family.

Component of an amino-acid transport system. The protein is Leu/Ile/Val-binding protein homolog 2 of Brucella abortus (strain 2308).